We begin with the raw amino-acid sequence, 122 residues long: Large ribosomal subunit protein bL12 (122 aa).

It belongs to the bacterial ribosomal protein bL12 family. Homodimer. Part of the ribosomal stalk of the 50S ribosomal subunit. Forms a multimeric L10(L12)X complex, where L10 forms an elongated spine to which 2 to 4 L12 dimers bind in a sequential fashion. Binds GTP-bound translation factors.

Its function is as follows. Forms part of the ribosomal stalk which helps the ribosome interact with GTP-bound translation factors. Is thus essential for accurate translation. In Mycoplasma genitalium (strain ATCC 33530 / DSM 19775 / NCTC 10195 / G37) (Mycoplasmoides genitalium), this protein is Large ribosomal subunit protein bL12.